A 456-amino-acid chain; its full sequence is UDP-N-acetylglucosamine 1-carboxyvinyltransferase (456 aa).

Residue 34–35 coordinates phosphoenolpyruvate; that stretch reads KN. A UDP-N-acetyl-alpha-D-glucosamine-binding site is contributed by arginine 104. Catalysis depends on cysteine 128, which acts as the Proton donor. Cysteine 128 carries the 2-(S-cysteinyl)pyruvic acid O-phosphothioketal modification. The UDP-N-acetyl-alpha-D-glucosamine site is built by aspartate 319 and isoleucine 341.

This sequence belongs to the EPSP synthase family. MurA subfamily.

Its subcellular location is the cytoplasm. The enzyme catalyses phosphoenolpyruvate + UDP-N-acetyl-alpha-D-glucosamine = UDP-N-acetyl-3-O-(1-carboxyvinyl)-alpha-D-glucosamine + phosphate. It functions in the pathway cell wall biogenesis; peptidoglycan biosynthesis. In terms of biological role, cell wall formation. Adds enolpyruvyl to UDP-N-acetylglucosamine. This chain is UDP-N-acetylglucosamine 1-carboxyvinyltransferase, found in Prochlorococcus marinus (strain MIT 9301).